A 491-amino-acid chain; its full sequence is Probable cytosol aminopeptidase (491 aa).

Residues K260 and D265 each coordinate Mn(2+). The active site involves K272. Positions 284, 343, and 345 each coordinate Mn(2+). Residue R347 is part of the active site.

It belongs to the peptidase M17 family. Mn(2+) serves as cofactor.

Its subcellular location is the cytoplasm. The catalysed reaction is Release of an N-terminal amino acid, Xaa-|-Yaa-, in which Xaa is preferably Leu, but may be other amino acids including Pro although not Arg or Lys, and Yaa may be Pro. Amino acid amides and methyl esters are also readily hydrolyzed, but rates on arylamides are exceedingly low.. It catalyses the reaction Release of an N-terminal amino acid, preferentially leucine, but not glutamic or aspartic acids.. Functionally, presumably involved in the processing and regular turnover of intracellular proteins. Catalyzes the removal of unsubstituted N-terminal amino acids from various peptides. This chain is Probable cytosol aminopeptidase, found in Trichormus variabilis (strain ATCC 29413 / PCC 7937) (Anabaena variabilis).